Consider the following 225-residue polypeptide: Phosphoglycolate phosphatase (225 aa).

The Nucleophile role is filled by aspartate 11. The Mg(2+) site is built by aspartate 11 and aspartate 13. Lysine 153 is a binding site for substrate. Mg(2+)-binding residues include aspartate 176 and aspartate 180.

The protein belongs to the archaeal SPP-like hydrolase family. Requires Mg(2+) as cofactor.

It catalyses the reaction 2-phosphoglycolate + H2O = glycolate + phosphate. Functionally, catalyzes the dephosphorylation of 2-phosphoglycolate. The protein is Phosphoglycolate phosphatase of Halobacterium salinarum (strain ATCC 29341 / DSM 671 / R1).